Consider the following 813-residue polypeptide: Leucine--tRNA ligase (813 aa).

Residues 42-52 (PYTSGNLHIGH) carry the 'HIGH' region motif. Residues 580 to 584 (KMSKS) carry the 'KMSKS' region motif. K583 contributes to the ATP binding site.

The protein belongs to the class-I aminoacyl-tRNA synthetase family.

It localises to the cytoplasm. It catalyses the reaction tRNA(Leu) + L-leucine + ATP = L-leucyl-tRNA(Leu) + AMP + diphosphate. The polypeptide is Leucine--tRNA ligase (Dehalococcoides mccartyi (strain CBDB1)).